A 464-amino-acid polypeptide reads, in one-letter code: Glutamate--tRNA ligase (464 aa).

The 'HIGH' region motif lies at 9–19; the sequence is PSPTGYLHIGG. Residues 242–246 carry the 'KMSKS' region motif; the sequence is KISKR. Position 245 (Lys-245) interacts with ATP.

This sequence belongs to the class-I aminoacyl-tRNA synthetase family. Glutamate--tRNA ligase type 1 subfamily. As to quaternary structure, monomer.

Its subcellular location is the cytoplasm. The catalysed reaction is tRNA(Glu) + L-glutamate + ATP = L-glutamyl-tRNA(Glu) + AMP + diphosphate. In terms of biological role, catalyzes the attachment of glutamate to tRNA(Glu) in a two-step reaction: glutamate is first activated by ATP to form Glu-AMP and then transferred to the acceptor end of tRNA(Glu). This chain is Glutamate--tRNA ligase, found in Neisseria meningitidis serogroup C / serotype 2a (strain ATCC 700532 / DSM 15464 / FAM18).